The following is a 434-amino-acid chain: Histidinol dehydrogenase (434 aa).

Residues Tyr130, Gln188, and Asn211 each coordinate NAD(+). 3 residues coordinate substrate: Ser237, Gln259, and His262. Zn(2+) is bound by residues Gln259 and His262. Residues Glu326 and His327 each act as proton acceptor in the active site. Substrate contacts are provided by His327, Asp360, Glu414, and His419. Asp360 serves as a coordination point for Zn(2+). Residue His419 participates in Zn(2+) binding.

Belongs to the histidinol dehydrogenase family. As to quaternary structure, homodimer. The cofactor is Zn(2+).

It catalyses the reaction L-histidinol + 2 NAD(+) + H2O = L-histidine + 2 NADH + 3 H(+). The protein operates within amino-acid biosynthesis; L-histidine biosynthesis; L-histidine from 5-phospho-alpha-D-ribose 1-diphosphate: step 9/9. Functionally, catalyzes the sequential NAD-dependent oxidations of L-histidinol to L-histidinaldehyde and then to L-histidine. The polypeptide is Histidinol dehydrogenase (Escherichia coli O157:H7).